The chain runs to 261 residues: Pantothenate synthetase (261 aa).

29-36 is a binding site for ATP; that stretch reads MGALHNGH. Catalysis depends on histidine 36, which acts as the Proton donor. Residue glutamine 60 coordinates (R)-pantoate. Residue glutamine 60 participates in beta-alanine binding. 147 to 150 is an ATP binding site; the sequence is GEKD. (R)-pantoate is bound at residue glutamine 153. 184–187 contacts ATP; sequence LSSR.

This sequence belongs to the pantothenate synthetase family. As to quaternary structure, homodimer.

It localises to the cytoplasm. The enzyme catalyses (R)-pantoate + beta-alanine + ATP = (R)-pantothenate + AMP + diphosphate + H(+). It participates in cofactor biosynthesis; (R)-pantothenate biosynthesis; (R)-pantothenate from (R)-pantoate and beta-alanine: step 1/1. In terms of biological role, catalyzes the condensation of pantoate with beta-alanine in an ATP-dependent reaction via a pantoyl-adenylate intermediate. This is Pantothenate synthetase from Francisella philomiragia subsp. philomiragia (strain ATCC 25017 / CCUG 19701 / FSC 153 / O#319-036).